We begin with the raw amino-acid sequence, 823 residues long: Ubiquitin carboxyl-terminal hydrolase 16 (823 aa).

The UBP-type zinc-finger motif lies at 22–142 (PVCRHIRKGL…QVVDYVRKQA (121 aa)). Positions 24, 26, 48, 51, 74, 77, 82, 90, 94, 103, 116, and 119 each coordinate Zn(2+). Residue Lys140 forms a Glycyl lysine isopeptide (Lys-Gly) (interchain with G-Cter in SUMO2) linkage. Residues 146 to 189 (TPKPAEKDNGNIELENKKLEKESKNEQEREKKENMAKENPPMNS) form a disordered region. Basic and acidic residues predominate over residues 149–181 (PAEKDNGNIELENKKLEKESKNEQEREKKENMA). Position 189 is a phosphoserine (Ser189). The USP domain occupies 196–822 (KGLSNLGNTC…QAYLLFYERI (627 aa)). Cys205 acts as the Nucleophile in catalysis. The segment covering 394–408 (SGKKSVNDKNLKKTV) has biased composition (basic and acidic residues). The interval 394-460 (SGKKSVNDKN…AKNQRRQQKI (67 aa)) is disordered. Acidic residues predominate over residues 409–420 (EDEDQDSEEEKD). Ser415 is modified (phosphoserine). A compositionally biased stretch (basic and acidic residues) spans 421–430 (NDSYIKERSD). Positions 438 to 458 (HLQKKAKKQAKKQAKNQRRQQ) are enriched in basic residues. Phosphoserine is present on residues Ser531 and Ser552. The residue at position 554 (Thr554) is a Phosphothreonine. The active-site Proton acceptor is His758.

Belongs to the peptidase C19 family. USP16 subfamily. As to quaternary structure, homotetramer. Associates with late pre-40S ribosomes. Interacts with CEP78; promoting deubiquitination of tektins. In terms of processing, phosphorylated at the onset of mitosis and dephosphorylated during the metaphase/anaphase transition. Phosphorylation by AURKB enhances the deubiquitinase activity. As to expression, present in all the tissues examined including fetal brain, lung, liver, kidney, and adult heart, brain, placenta, lung, liver, skeletal muscle, kidney and pancreas.

Its subcellular location is the nucleus. The protein localises to the cytoplasm. The catalysed reaction is Thiol-dependent hydrolysis of ester, thioester, amide, peptide and isopeptide bonds formed by the C-terminal Gly of ubiquitin (a 76-residue protein attached to proteins as an intracellular targeting signal).. Functionally, specifically deubiquitinates 'Lys-120' of histone H2A (H2AK119Ub), a specific tag for epigenetic transcriptional repression, thereby acting as a coactivator. Deubiquitination of histone H2A is a prerequisite for subsequent phosphorylation at 'Ser-11' of histone H3 (H3S10ph), and is required for chromosome segregation when cells enter into mitosis. In resting B- and T-lymphocytes, phosphorylation by AURKB leads to enhance its activity, thereby maintaining transcription in resting lymphocytes. Regulates Hox gene expression via histone H2A deubiquitination. Prefers nucleosomal substrates. Does not deubiquitinate histone H2B. Also deubiquitinates non-histone proteins, such as ribosomal protein RPS27A: deubiquitination of monoubiquitinated RPS27A promotes maturation of the 40S ribosomal subunit. Also mediates deubiquitination of tektin proteins (TEKT1, TEKT2, TEK3, TEKT4 and TEKT5), promoting their stability. The protein is Ubiquitin carboxyl-terminal hydrolase 16 of Homo sapiens (Human).